The following is a 232-amino-acid chain: Uracil phosphoribosyltransferase (232 aa).

GTP is bound at residue Lys38 to Arg42. Residues Arg87, Arg112, and Asp140 to Thr148 each bind 5-phospho-alpha-D-ribose 1-diphosphate. Residues Ile204 and Gly209–Ala211 contribute to the uracil site. Position 210 (Asp210) interacts with 5-phospho-alpha-D-ribose 1-diphosphate.

It belongs to the UPRTase family. It depends on Mg(2+) as a cofactor.

It carries out the reaction UMP + diphosphate = 5-phospho-alpha-D-ribose 1-diphosphate + uracil. Its pathway is pyrimidine metabolism; UMP biosynthesis via salvage pathway; UMP from uracil: step 1/1. Allosterically activated by GTP. Its function is as follows. Catalyzes the conversion of uracil and 5-phospho-alpha-D-ribose 1-diphosphate (PRPP) to UMP and diphosphate. This is Uracil phosphoribosyltransferase from Methanococcus vannielii (strain ATCC 35089 / DSM 1224 / JCM 13029 / OCM 148 / SB).